Here is a 759-residue protein sequence, read N- to C-terminus: MESSPFNRRQWTSLSLRVTAKELSLVNKNKSSAIVEIFSKYQKAAEETNMEKKRSNTENLSQHFRKGTLTVLKKKWENPGLGAESHTDSLRNSSTEIRHRADHPPAEVTSHAASGAKADQEEQIHPRSRLRSPPEALVQGRYPHIKDGEDLKDHSTESKKMENCLGESRHEVEKSEISENTDASGKIEKYNVPLNRLKMMFEKGEPTQTKILRAQSRSASGRKISENSYSLDDLEIGPGQLSSSTFDSEKNESRRNLELPRLSETSIKDRMAKYQAAVSKQSSSTNYTNELKASGGEIKIHKMEQKENVPPGPEVCITHQEGEKISANENSLAVRSTPAEDDSRDSQVKSEVQQPVHPKPLSPDSRASSLSESSPPKAMKKFQAPARETCVECQKTVYPMERLLANQQVFHISCFRCSYCNNKLSLGTYASLHGRIYCKPHFNQLFKSKGNYDEGFGHRPHKDLWASKNENEEILERPAQLANARETPHSPGVEDAPIAKVGVLAASMEAKASSQQEKEDKPAETKKLRIAWPPPTELGSSGSALEEGIKMSKPKWPPEDEISKPEVPEDVDLDLKKLRRSSSLKERSRPFTVAASFQSTSVKSPKTVSPPIRKGWSMSEQSEESVGGRVAERKQVENAKASKKNGNVGKTTWQNKESKGETGKRSKEGHSLEMENENLVENGADSDEDDNSFLKQQSPQEPKSLNWSSFVDNTFAEEFTTQNQKSQDVELWEGEVVKELSVEEQIKRNRYYDEDEDEE.

Residue methionine 1 is modified to N-acetylmethionine. Residues serine 4, serine 15, and serine 55 each carry the phosphoserine modification. Positions 78 to 131 are disordered; sequence NPGLGAESHTDSLRNSSTEIRHRADHPPAEVTSHAASGAKADQEEQIHPRSRLR. The segment covering 96 to 105 has biased composition (basic and acidic residues); that stretch reads EIRHRADHPP. Serine 132 is modified (phosphoserine). Basic and acidic residues predominate over residues 146 to 177; it reads KDGEDLKDHSTESKKMENCLGESRHEVEKSEI. Positions 146 to 182 are disordered; that stretch reads KDGEDLKDHSTESKKMENCLGESRHEVEKSEISENTD. A Required for interaction with NPC1L1 motif is present at residues 164-166; that stretch reads CLG. Alanine 183 and serine 225 each carry phosphoserine. Disordered stretches follow at residues 211–264 and 323–381; these read ILRA…RLSE and EKIS…AMKK. Tyrosine 229 bears the Phosphotyrosine mark. Phosphoserine occurs at positions 230 and 242. Residues 247–258 are compositionally biased toward basic and acidic residues; sequence DSEKNESRRNLE. Residues serine 263, serine 343, serine 350, serine 362, serine 365, serine 369, and serine 374 each carry the phosphoserine modification. Low complexity predominate over residues 362-376; that stretch reads SPDSRASSLSESSPP. One can recognise an LIM zinc-binding domain in the interval 388–448; the sequence is ETCVECQKTV…KPHFNQLFKS (61 aa). N6-succinyllysine is present on lysine 439. Serine 490 is modified (phosphoserine). A required for interaction with MYO5B region spans residues 493–513; that stretch reads VEDAPIAKVGVLAASMEAKAS. The tract at residues 509 to 709 is disordered; it reads EAKASSQQEK…QEPKSLNWSS (201 aa). 2 stretches are compositionally biased toward basic and acidic residues: residues 516-527 and 556-567; these read QEKEDKPAETKK and WPPEDEISKPEV. Positions 595–607 are enriched in polar residues; that stretch reads ASFQSTSVKSPKT. Phosphoserine is present on residues serine 601, serine 604, serine 609, and serine 617. Residues 644–655 are compositionally biased toward polar residues; it reads KNGNVGKTTWQN. Positions 656-673 are enriched in basic and acidic residues; it reads KESKGETGKRSKEGHSLE. Residues 674 to 691 show a composition bias toward acidic residues; that stretch reads MENENLVENGADSDEDDN. A phosphoserine mark is found at serine 686, serine 692, serine 698, serine 726, and serine 741. The segment covering 693–709 has biased composition (polar residues); sequence FLKQQSPQEPKSLNWSS.

In terms of assembly, interacts with NPC1L1; bridges NPC1L1 with MYO5B. Interacts with MYO5B; bridges NPC1L1 with MYO5B. Interacts with PXN; this complex stabilizes actin dynamics. Interacts with F-actin and G-actin. Interacts with LUZP1 (via C-terminus); both proteins restrict ciliation and may work together to regulate this process. Binds RAB40B (GTP-bound); interaction influences LIMA1 subcellular localization in lamellipodia during cell migration. Post-translationally, ubiquitinated by the ECS(RAB40B) complex leading to its degradation. Phosphorylation of the C-terminal region by MAPK1/MAPK3 reduces its association with F-actin and contributes to actin filament reorganization and enhances cell motility. In terms of tissue distribution, highly expressed in placenta, kidney, pancreas, prostate, ovary, spleen and heart. Also detected in lung, liver, brain, skeletal muscle, thymus, testis and intestine. Not detected in leukocytes. Isoform Beta expressed generally at very low levels. Isoform Alpha abundant in epithelial cells from mammary gland, prostate and in normal oral keratinocytes. Low levels in aortic endothelial cells and dermal fibroblasts. Not detectable in myocardium.

The protein localises to the cytoplasm. It is found in the cell junction. Its subcellular location is the focal adhesion. The protein resides in the cytoskeleton. It localises to the stress fiber. The protein localises to the cell membrane. It is found in the cell projection. Its subcellular location is the ruffle. The protein resides in the lamellipodium. Its function is as follows. Actin-binding protein involved in actin cytoskeleton regulation and dynamics. Increases the number and size of actin stress fibers and inhibits membrane ruffling. Inhibits actin filament depolymerization. Bundles actin filaments, delays filament nucleation and reduces formation of branched filaments. Acts as a negative regulator of primary cilium formation. Plays a role in cholesterol homeostasis. Influences plasma cholesterol levels through regulation of intestinal cholesterol absorption. May act as a scaffold protein by regulating NPC1L1 transportation, an essential protein for cholesterol absorption, to the plasma membrane by recruiting MYO5B to NPC1L1, and thus facilitates cholesterol uptake. The sequence is that of LIM domain and actin-binding protein 1 from Homo sapiens (Human).